The sequence spans 389 residues: Shewanella-like protein phosphatase 1 (389 aa).

Residues 1 to 53 constitute a chloroplast transit peptide; the sequence is MASLYLNSLLPLPPSHPQKLLEPSSSSLLSTSNGNELALKPIVINGDPPTFVS. Asp-64, His-66, Asp-102, and Asn-137 together coordinate Mn(2+). His-138 acts as the Proton donor in catalysis. Residues His-242 and His-314 each contribute to the Mn(2+) site.

It belongs to the metallophosphoesterase superfamily. SLP family. Mn(2+) is required as a cofactor. In terms of tissue distribution, expressed in rosettes leaves, shoots and flowers (at protein level).

The protein localises to the plastid. Its subcellular location is the chloroplast. Shows phosphatase activity, hydrolyzing the artificial substrate para-nitrophenylphosphate (pNPP) in vitro. The polypeptide is Shewanella-like protein phosphatase 1 (Arabidopsis thaliana (Mouse-ear cress)).